Consider the following 404-residue polypeptide: Imidazolonepropionase (404 aa).

Positions 70 and 72 each coordinate Fe(3+). Residues His-70 and His-72 each coordinate Zn(2+). Positions 79, 142, and 174 each coordinate 4-imidazolone-5-propanoate. Tyr-142 is an N-formimidoyl-L-glutamate binding site. His-234 contacts Fe(3+). Position 234 (His-234) interacts with Zn(2+). Glu-237 is a 4-imidazolone-5-propanoate binding site. A Fe(3+)-binding site is contributed by Asp-308. Asp-308 contributes to the Zn(2+) binding site.

Belongs to the metallo-dependent hydrolases superfamily. HutI family. The cofactor is Zn(2+). It depends on Fe(3+) as a cofactor.

Its subcellular location is the cytoplasm. The catalysed reaction is 4-imidazolone-5-propanoate + H2O = N-formimidoyl-L-glutamate. It participates in amino-acid degradation; L-histidine degradation into L-glutamate; N-formimidoyl-L-glutamate from L-histidine: step 3/3. Catalyzes the hydrolytic cleavage of the carbon-nitrogen bond in imidazolone-5-propanoate to yield N-formimidoyl-L-glutamate. It is the third step in the universal histidine degradation pathway. This is Imidazolonepropionase from Thermoplasma volcanium (strain ATCC 51530 / DSM 4299 / JCM 9571 / NBRC 15438 / GSS1).